The primary structure comprises 163 residues: Endoribonuclease YbeY (163 aa).

The Zn(2+) site is built by His-116, His-120, and His-126.

Belongs to the endoribonuclease YbeY family. The cofactor is Zn(2+).

Its subcellular location is the cytoplasm. Its function is as follows. Single strand-specific metallo-endoribonuclease involved in late-stage 70S ribosome quality control and in maturation of the 3' terminus of the 16S rRNA. This Idiomarina loihiensis (strain ATCC BAA-735 / DSM 15497 / L2-TR) protein is Endoribonuclease YbeY.